We begin with the raw amino-acid sequence, 94 residues long: Putative RNA-binding protein RbpD (94 aa).

The 78-residue stretch at 2–79 (TIYVGNLSYR…RQLRVNKAKP (78 aa)) folds into the RRM domain. The disordered stretch occupies residues 73 to 94 (RVNKAKPREDDRRGSWGKKQDY). A compositionally biased stretch (basic and acidic residues) spans 78-94 (KPREDDRRGSWGKKQDY).

The polypeptide is Putative RNA-binding protein RbpD (rbpD) (Nostoc sp. (strain PCC 7120 / SAG 25.82 / UTEX 2576)).